Consider the following 180-residue polypeptide: uncharacterized protein (180 aa).

The tract at residues 138-180 (SVMPVPMPQQNSDNGSTPHIVDSSKSKDKSSNDGDNGVFTGDE) is disordered. Over residues 145–154 (PQQNSDNGST) the composition is skewed to polar residues. The segment covering 159 to 169 (DSSKSKDKSSN) has biased composition (basic and acidic residues).

This is an uncharacterized protein from Acidianus filamentous virus 2 (isolate Italy/Pozzuoli) (AFV-2).